The following is a 601-amino-acid chain: Trehalose synthase/amylase TreS (601 aa).

Positions 1–21 are disordered; it reads MNEAEHSVEHPPVQGSHVEGG. A substrate-binding site is contributed by Asp-98. Ca(2+) is bound at residue Asn-140. Substrate contacts are provided by His-141 and Gln-206. Asp-208 serves as a coordination point for Ca(2+). Arg-236 provides a ligand contact to substrate. Asp-238 serves as the catalytic Nucleophile. Tyr-242, Leu-243, and Glu-245 together coordinate Ca(2+). Catalysis depends on Glu-280, which acts as the Proton donor. 2 residues coordinate substrate: His-349 and Asp-350.

Belongs to the glycosyl hydrolase 13 family. TreS subfamily. Homohexamer.

It catalyses the reaction D-maltose = alpha,alpha-trehalose. The enzyme catalyses Endohydrolysis of (1-&gt;4)-alpha-D-glucosidic linkages in polysaccharides containing three or more (1-&gt;4)-alpha-linked D-glucose units.. The protein operates within glycan biosynthesis; glycogen biosynthesis. It participates in capsule biogenesis; capsule polysaccharide biosynthesis. Functionally, catalyzes the reversible interconversion of maltose and trehalose by transglucosylation. Also displays amylase activity, catalyzing the endohydrolysis of (1-&gt;4)-alpha-D-glucosidic linkages in glycogen and maltooligosaccharides such as maltoheptaose, to produce maltose which then can be converted to trehalose. TreS plays a key role in the utilization of trehalose for the production of glycogen and alpha-glucan via the TreS-Pep2 branch involved in the biosynthesis of maltose-1-phosphate (M1P). Might also function as a sensor and/or regulator of trehalose levels within the cell. Thus, when trehalose levels in the cell become dangerously low, TreS could expedite the conversion of glycogen to maltose via its amylase activity and then convert the maltose to trehalose; but this enzyme also could expedite or promote the conversion of trehalose to glycogen when cytoplasmic trehalose levels become too high. This Mycobacterium tuberculosis (strain CDC 1551 / Oshkosh) protein is Trehalose synthase/amylase TreS.